A 1174-amino-acid chain; its full sequence is Fanconi anemia group J protein homolog (1174 aa).

The Helicase ATP-binding domain occupies glycine 11–cysteine 445. The span at asparagine 101–glutamine 126 shows a compositional bias: polar residues. Disordered stretches follow at residues asparagine 101–arginine 160 and leucine 187–aspartate 208. Over residues leucine 134–glutamine 143 the composition is skewed to low complexity. Positions lysine 158–cysteine 175 match the Nuclear localization signal motif. Alanine 185–arginine 192 is an ATP binding site. Cysteine 286, cysteine 301, cysteine 313, and cysteine 353 together coordinate [4Fe-4S] cluster. Residues valine 393–aspartate 396 carry the DEAH box motif. The interval serine 888 to glycine 1063 is interaction with BRCA1. Composition is skewed to polar residues over residues threonine 923–asparagine 935 and serine 990–threonine 1001. Disordered stretches follow at residues threonine 923–threonine 1001 and leucine 1102–serine 1155. A phosphoserine mark is found at serine 929, serine 932, and serine 994. The span at aspartate 1138–valine 1147 shows a compositional bias: acidic residues. Lysine 1174 carries the post-translational modification N6-acetyllysine.

This sequence belongs to the DEAD box helicase family. DEAH subfamily. As to quaternary structure, binds directly to the BRCT domains of BRCA1. Interacts with the CIA complex components CIAO1, CIAO2B and MMS19. The cofactor is [4Fe-4S] cluster. In terms of processing, phosphorylated. Phosphorylation is necessary for interaction with BRCA1, and is cell-cycle regulated.

The protein localises to the nucleus. The protein resides in the cytoplasm. The catalysed reaction is Couples ATP hydrolysis with the unwinding of duplex DNA at the replication fork by translocating in the 5'-3' direction. This creates two antiparallel DNA single strands (ssDNA). The leading ssDNA polymer is the template for DNA polymerase III holoenzyme which synthesizes a continuous strand.. It catalyses the reaction ATP + H2O = ADP + phosphate + H(+). Functionally, DNA-dependent helicase and 5' to 3' DNA helicase required for the maintenance of chromosomal stability. Acts late in the Fanconi anemia pathway, after FANCD2 ubiquitination. Involved in the repair of DNA double-strand breaks by homologous recombination in a manner that depends on its association with BRCA1. Involved in the repair of abasic sites at replication forks by promoting the degradation of DNA-protein cross-links: acts by catalyzing unfolding of HMCES DNA-protein cross-link via its helicase activity, exposing the underlying DNA and enabling cleavage of the DNA-protein adduct by the SPRTN metalloprotease. Can unwind RNA:DNA hybrids and G-quadruplex DNA. This Mus musculus (Mouse) protein is Fanconi anemia group J protein homolog.